Consider the following 430-residue polypeptide: Enolase (430 aa).

Q164 contacts (2R)-2-phosphoglycerate. Catalysis depends on E206, which acts as the Proton donor. Residues D243, E288, and D315 each contribute to the Mg(2+) site. (2R)-2-phosphoglycerate is bound by residues K340, R369, S370, and K391. Catalysis depends on K340, which acts as the Proton acceptor.

It belongs to the enolase family. It depends on Mg(2+) as a cofactor.

It is found in the cytoplasm. It localises to the secreted. Its subcellular location is the cell surface. It carries out the reaction (2R)-2-phosphoglycerate = phosphoenolpyruvate + H2O. The protein operates within carbohydrate degradation; glycolysis; pyruvate from D-glyceraldehyde 3-phosphate: step 4/5. Catalyzes the reversible conversion of 2-phosphoglycerate (2-PG) into phosphoenolpyruvate (PEP). It is essential for the degradation of carbohydrates via glycolysis. This chain is Enolase, found in Lysinibacillus sphaericus (strain C3-41).